The chain runs to 403 residues: DNA replication and repair protein RecF (403 aa).

ATP is bound at residue 30-37 (GSNGLGKT).

The protein belongs to the RecF family.

The protein localises to the cytoplasm. Functionally, the RecF protein is involved in DNA metabolism; it is required for DNA replication and normal SOS inducibility. RecF binds preferentially to single-stranded, linear DNA. It also seems to bind ATP. The polypeptide is DNA replication and repair protein RecF (Bifidobacterium adolescentis (strain ATCC 15703 / DSM 20083 / NCTC 11814 / E194a)).